A 300-amino-acid chain; its full sequence is 11-beta-hydroxysteroid dehydrogenase 1 (300 aa).

The Cytoplasmic portion of the chain corresponds to 1–7 (MAFLKKY). The helical; Signal-anchor for type II membrane protein transmembrane segment at 8–24 (LLTILMVFLAYYYYSAN) threads the bilayer. The Lumenal portion of the chain corresponds to 25–300 (EKFRPEMLQG…SNEKLYGRWA (276 aa)). Residues 41–67 (GASKGIGREIAYHLAKMGAHVVVTARS), 92–93 (SM), and 119–123 (NHVLY) contribute to the NADP(+) site. Position 170 (serine 170) interacts with substrate. Catalysis depends on tyrosine 183, which acts as the Proton acceptor. 183–187 (YSASK) contacts NADP(+). A glycan (N-linked (GlcNAc...) asparagine) is linked at asparagine 207. 218–222 (IDTET) is a binding site for NADP(+).

The protein belongs to the short-chain dehydrogenases/reductases (SDR) family. Homodimer. As to expression, widely expressed in all peripheral tissues, with highest expression in liver, followed by kidney and lung, and very low expression in heart, lung, spleen, stomach, small intestine, colon, skin, skeletal muscle, and ovary.

Its subcellular location is the endoplasmic reticulum membrane. The enzyme catalyses an 11beta-hydroxysteroid + NADP(+) = an 11-oxosteroid + NADPH + H(+). It carries out the reaction cortisone + NADPH + H(+) = cortisol + NADP(+). The catalysed reaction is corticosterone + NADP(+) = 11-dehydrocorticosterone + NADPH + H(+). It catalyses the reaction a 7beta-hydroxysteroid + NADP(+) = a 7-oxosteroid + NADPH + H(+). The enzyme catalyses 7-oxocholesterol + NADPH + H(+) = 7beta-hydroxycholesterol + NADP(+). It carries out the reaction chenodeoxycholate + NADP(+) = 7-oxolithocholate + NADPH + H(+). The catalysed reaction is 7-oxolithocholate + NADPH + H(+) = ursodeoxycholate + NADP(+). It catalyses the reaction glycochenodeoxycholate + NADP(+) = 7-oxoglycolithocholate + NADPH + H(+). The enzyme catalyses taurochenodeoxycholate + NADP(+) = 7-oxotaurolithocholate + NADPH + H(+). It carries out the reaction tauroursodeoxycholate + NADP(+) = 7-oxotaurolithocholate + NADPH + H(+). The catalysed reaction is glycoursodeoxycholate + NADP(+) = 7-oxoglycolithocholate + NADPH + H(+). It catalyses the reaction 7-oxopregnenolone + NADPH + H(+) = 7beta-hydroxypregnenolone + NADP(+). The enzyme catalyses 3beta,7alpha-dihydroxyandrost-5-en-17-one + NADP(+) = 3beta-hydroxy-5-androstene-7,17-dione + NADPH + H(+). It carries out the reaction 3beta-hydroxy-5-androstene-7,17-dione + NADPH + H(+) = 3beta,7beta-dihydroxyandrost-5-en-17-one + NADP(+). The catalysed reaction is 3beta-hydroxy-5alpha-androstane-7,17-dione + NADPH + H(+) = 3beta,7beta-dihydroxy-5alpha-androstan-17-one + NADP(+). Controls the reversible conversion of biologically active glucocorticoids such as cortisone to cortisol, and 11-dehydrocorticosterone to corticosterone in the presence of NADP(H). Participates in the corticosteroid receptor-mediated anti-inflammatory response, as well as metabolic and homeostatic processes. Bidirectional in vitro, predominantly functions as a reductase in vivo, thereby increasing the concentration of active glucocorticoids. It has broad substrate specificity, besides glucocorticoids, it accepts other steroid and sterol substrates. Interconverts 7-oxo- and 7-hydroxy-neurosteroids such as 7-oxopregnenolone and 7beta-hydroxypregnenolone, 7-oxodehydroepiandrosterone (3beta-hydroxy-5-androstene-7,17-dione) and 7beta-hydroxydehydroepiandrosterone (3beta,7beta-dihydroxyandrost-5-en-17-one), among others. Catalyzes the stereo-specific conversion of the major dietary oxysterol, 7-ketocholesterol (7-oxocholesterol), into the more polar 7-beta-hydroxycholesterol metabolite. 7-oxocholesterol is one of the most important oxysterols, it participates in several events such as induction of apoptosis, accumulation in atherosclerotic lesions, lipid peroxidation, and induction of foam cell formation. Mediates the 7-oxo reduction of 7-oxolithocholate mainly to chenodeoxycholate, and to a lesser extent to ursodeoxycholate, both in its free form and when conjugated to glycine or taurine, providing a link between glucocorticoid activation and bile acid metabolism. Catalyzes the synthesis of 7-beta-25-dihydroxycholesterol from 7-oxo-25-hydroxycholesterol in vitro, which acts as a ligand for the G-protein-coupled receptor (GPCR) Epstein-Barr virus-induced gene 2 (EBI2) and may thereby regulate immune cell migration. This Cavia porcellus (Guinea pig) protein is 11-beta-hydroxysteroid dehydrogenase 1 (HSD11B1).